Here is a 124-residue protein sequence, read N- to C-terminus: MFAVIKANGKQYRVAAADEITIDHLDAEVGSVFTFPVLMLGGATVAIGAPHVDGATVTGEVVEQTRGDKVIAFKKRRRQNSRRKRGFRADLTVVRITEISGLGETVKAEPKSKRAPAPEAAADA.

Positions 105–124 (TVKAEPKSKRAPAPEAAADA) are disordered. The span at 115–124 (APAPEAAADA) shows a compositional bias: low complexity.

Belongs to the bacterial ribosomal protein bL21 family. As to quaternary structure, part of the 50S ribosomal subunit. Contacts protein L20.

Functionally, this protein binds to 23S rRNA in the presence of protein L20. The chain is Large ribosomal subunit protein bL21 from Xanthobacter autotrophicus (strain ATCC BAA-1158 / Py2).